The chain runs to 158 residues: Protein EOLA2 (158 aa).

Positions 6–92 constitute an ASCH domain; that stretch reads LSFRQPYAGF…IAGLVDIGET (87 aa).

It belongs to the EOLA family.

In Homo sapiens (Human), this protein is Protein EOLA2.